A 309-amino-acid chain; its full sequence is 2-phospho-L-lactate transferase (309 aa).

7,8-didemethyl-8-hydroxy-5-deazariboflavin-binding residues include Asp50 and Lys89.

This sequence belongs to the CofD family. As to quaternary structure, homodimer. Requires Mg(2+) as cofactor.

The catalysed reaction is (2S)-lactyl-2-diphospho-5'-guanosine + 7,8-didemethyl-8-hydroxy-5-deazariboflavin = oxidized coenzyme F420-0 + GMP + H(+). It participates in cofactor biosynthesis; coenzyme F420 biosynthesis. Catalyzes the transfer of the 2-phospholactate moiety from (2S)-lactyl-2-diphospho-5'-guanosine to 7,8-didemethyl-8-hydroxy-5-deazariboflavin (FO) with the formation of oxidized coenzyme F420-0 and GMP. In Methanococcus maripaludis (strain C7 / ATCC BAA-1331), this protein is 2-phospho-L-lactate transferase.